The chain runs to 491 residues: Sucrose transport protein SUC9 (491 aa).

Positions Met-1–Pro-12 are enriched in basic and acidic residues. The segment at Met-1–Glu-26 is disordered. Topologically, residues Met-1–Met-33 are cytoplasmic. Ser-17 carries the phosphoserine modification. A helical membrane pass occupies residues Ile-34–Leu-54. The Extracellular segment spans residues Thr-55 to Ser-68. The chain crosses the membrane as a helical span at residues Ser-69–Phe-89. The Cytoplasmic segment spans residues Ser-90–Arg-101. Residues Pro-102–Ala-122 form a helical membrane-spanning segment. Residues Asp-123 to Arg-139 lie on the Extracellular side of the membrane. A helical transmembrane segment spans residues Ala-140 to Gly-160. Residues Pro-161–Asn-181 lie on the Cytoplasmic side of the membrane. A helical membrane pass occupies residues Ala-182–Thr-202. Residues Asn-203 to Lys-224 lie on the Extracellular side of the membrane. A helical membrane pass occupies residues Ser-225–Val-245. Topologically, residues Glu-246–Pro-277 are cytoplasmic. A helical transmembrane segment spans residues Met-278–Tyr-298. Topologically, residues Asp-299–Gly-329 are extracellular. The chain crosses the membrane as a helical span at residues Ser-330–Ile-350. Over Ser-351 to Arg-358 the chain is Cytoplasmic. A helical membrane pass occupies residues Leu-359–Lys-379. Residues Lys-380–Phe-406 lie on the Extracellular side of the membrane. A helical membrane pass occupies residues Ala-407 to Ile-427. The Cytoplasmic portion of the chain corresponds to Ser-428–Asn-443. A helical transmembrane segment spans residues Met-444–Phe-464. Residues Gly-465 to Asn-468 are Extracellular-facing. A helical transmembrane segment spans residues Leu-469 to Val-489. Residues Leu-490–Pro-491 are Cytoplasmic-facing.

Belongs to the glycoside-pentoside-hexuronide (GPH) cation symporter transporter (TC 2.A.2.4) family. Widely expressed.

The protein resides in the cell membrane. It catalyses the reaction sucrose(out) + H(+)(out) = sucrose(in) + H(+)(in). The protein operates within glycan biosynthesis; sucrose metabolism. With respect to regulation, inhibited by protonophores (e.g. carbonyl cyanide m-chlorophenyl-hydrazone (CCCP)) and SH group inhibitors (e.g. p-chloromercuribenzene sulphonic acid (PCMBS)). In terms of biological role, high-affinity sucrose transporter. Responsible for the transport of sucrose into the cell, with the concomitant uptake of protons (symport system). Can also transport a wide range of glucosides, such as helicin, salicin, arbutin, maltose, fraxin, esculin, uranose, alpha-methylglucoside, alpha-phenylglucoside and beta-phenylglucoside. Plays a role in flowering time transition delay. The polypeptide is Sucrose transport protein SUC9 (Arabidopsis thaliana (Mouse-ear cress)).